The sequence spans 158 residues: Transcriptional repressor NrdR (158 aa).

A zinc finger lies at 3–34; the sequence is CPYCGYPDSKVIDSRPTDDNTSIRRRRECLKC. Positions 49–139 constitute an ATP-cone domain; sequence ILVIKKDNRR…VYRQFKDINT (91 aa).

It belongs to the NrdR family. Zn(2+) is required as a cofactor.

Functionally, negatively regulates transcription of bacterial ribonucleotide reductase nrd genes and operons by binding to NrdR-boxes. The protein is Transcriptional repressor NrdR of Thermoanaerobacter sp. (strain X514).